The primary structure comprises 334 residues: Cathepsin J (334 aa).

An N-terminal signal peptide occupies residues 1–17 (MTPAVFLVILCFGVASG). A propeptide spans 18-113 (APARDPNLDA…PSAQKQVSIG (96 aa)) (activation peptide). Cys-138 is an active-site residue. Residues Asn-217, Asn-221, and Asn-268 are each glycosylated (N-linked (GlcNAc...) asparagine). Cys-269 and Cys-322 are joined by a disulfide. The active site involves His-276. An N-linked (GlcNAc...) asparagine glycan is attached at Asn-288. The active site involves Asn-300.

It belongs to the peptidase C1 family. In terms of tissue distribution, expressed specifically in placenta.

The protein resides in the lysosome. The polypeptide is Cathepsin J (Ctsj) (Rattus norvegicus (Rat)).